Reading from the N-terminus, the 644-residue chain is DNA mismatch repair protein MutL (644 aa).

This sequence belongs to the DNA mismatch repair MutL/HexB family.

Functionally, this protein is involved in the repair of mismatches in DNA. It is required for dam-dependent methyl-directed DNA mismatch repair. May act as a 'molecular matchmaker', a protein that promotes the formation of a stable complex between two or more DNA-binding proteins in an ATP-dependent manner without itself being part of a final effector complex. The sequence is that of DNA mismatch repair protein MutL from Chlorobium chlorochromatii (strain CaD3).